Reading from the N-terminus, the 240-residue chain is ATP-dependent dethiobiotin synthetase BioD (240 aa).

An ATP-binding site is contributed by Glu13–Val18. Residue Thr17 coordinates Mg(2+). The active site involves Lys38. Ser42 provides a ligand contact to substrate. ATP is bound by residues Asp55, Glu116–Gly119, Asn176–Asp177, and Pro205–Leu207. Mg(2+) contacts are provided by Asp55 and Glu116.

This sequence belongs to the dethiobiotin synthetase family. Homodimer. Mg(2+) serves as cofactor.

Its subcellular location is the cytoplasm. It catalyses the reaction (7R,8S)-7,8-diammoniononanoate + CO2 + ATP = (4R,5S)-dethiobiotin + ADP + phosphate + 3 H(+). It functions in the pathway cofactor biosynthesis; biotin biosynthesis; biotin from 7,8-diaminononanoate: step 1/2. Functionally, catalyzes a mechanistically unusual reaction, the ATP-dependent insertion of CO2 between the N7 and N8 nitrogen atoms of 7,8-diaminopelargonic acid (DAPA, also called 7,8-diammoniononanoate) to form a ureido ring. The polypeptide is ATP-dependent dethiobiotin synthetase BioD (Pseudescherichia vulneris (Escherichia vulneris)).